Here is a 93-residue protein sequence, read N- to C-terminus: DNA-directed RNA polymerase subunit Rpo11 (93 aa).

This sequence belongs to the archaeal Rpo11/eukaryotic RPB11/RPC19 RNA polymerase subunit family. As to quaternary structure, part of the RNA polymerase complex.

The protein resides in the cytoplasm. It carries out the reaction RNA(n) + a ribonucleoside 5'-triphosphate = RNA(n+1) + diphosphate. DNA-dependent RNA polymerase (RNAP) catalyzes the transcription of DNA into RNA using the four ribonucleoside triphosphates as substrates. This is DNA-directed RNA polymerase subunit Rpo11 from Methanocella arvoryzae (strain DSM 22066 / NBRC 105507 / MRE50).